We begin with the raw amino-acid sequence, 505 residues long: Alpha-1-syntrophin (505 aa).

Residues Met-1–Leu-77 are disordered. 2 PH domains span residues Arg-6–Asn-269 and Asp-293–His-401. Residues Arg-87 to Lys-170 enclose the PDZ domain. Phosphoserine occurs at positions 101, 184, 189, 193, and 200. The disordered stretch occupies residues Ala-180–Asp-211. The 57-residue stretch at Pro-449–Ala-505 folds into the SU domain. Residues Pro-483–Ala-505 form a calmodulin-binding region.

Belongs to the syntrophin family. In terms of assembly, monomer and homodimer. Interacts with the dystrophin related protein DTNA; SGCG of the dystrophin glycoprotein complex; NOS1; GRB2; GA; TGFA; MAPK12 and the sodium channel proteins SCN4A and SCN5A. Interacts with the dystrophin protein DMD in a calmodulin dependent manner and with related protein UTRN; SGCA of the dystrophin glycoprotein complex; F-actin; calmodulin and with the other members of the syntrophin family SNTB1 and SNTB2. Interacts with MYOC; regulates muscle hypertrophy. Interacts with DTNB. Post-translationally, phosphorylated by CaM-kinase II. Phosphorylation may inhibit the interaction with DMD.

It localises to the cell membrane. Its subcellular location is the sarcolemma. The protein resides in the cell junction. It is found in the cytoplasm. The protein localises to the cytoskeleton. In terms of biological role, adapter protein that binds to and probably organizes the subcellular localization of a variety of membrane proteins. May link various receptors to the actin cytoskeleton and the extracellular matrix via the dystrophin glycoprotein complex. Plays an important role in synapse formation and in the organization of UTRN and acetylcholine receptors at the neuromuscular synapse. Binds to phosphatidylinositol 4,5-bisphosphate. This Bos taurus (Bovine) protein is Alpha-1-syntrophin (SNTA1).